The chain runs to 627 residues: Glutamine--fructose-6-phosphate aminotransferase [isomerizing] (627 aa).

Cysteine 2 serves as the catalytic Nucleophile; for GATase activity. Positions 2–224 (CGIVGYIGTQ…NGEIARLTPL (223 aa)) constitute a Glutamine amidotransferase type-2 domain. 2 consecutive SIS domains span residues 293–442 (LPEN…HRQT) and 476–617 (LAHE…VDQP). The active-site For Fru-6P isomerization activity is lysine 622.

As to quaternary structure, homodimer.

It is found in the cytoplasm. It catalyses the reaction D-fructose 6-phosphate + L-glutamine = D-glucosamine 6-phosphate + L-glutamate. Its function is as follows. Catalyzes the first step in hexosamine metabolism, converting fructose-6P into glucosamine-6P using glutamine as a nitrogen source. This chain is Glutamine--fructose-6-phosphate aminotransferase [isomerizing], found in Nostoc sp. (strain PCC 9229).